The sequence spans 65 residues: Small ribosomal subunit protein bS21 (65 aa).

This sequence belongs to the bacterial ribosomal protein bS21 family.

The polypeptide is Small ribosomal subunit protein bS21 (Geobacter sp. (strain M21)).